A 683-amino-acid chain; its full sequence is Acetyl-coenzyme A synthetase 2 (683 aa).

CoA contacts are provided by residues 206-209 (RGGK) and Thr325. ATP is bound by residues 401 to 403 (GEP) and 425 to 430 (DTMWQT). An AMP-binding site is contributed by 425–430 (DTMWQT). Residue Lys506 forms a Glycyl lysine isopeptide (Lys-Gly) (interchain with G-Cter in ubiquitin) linkage. ATP contacts are provided by Asp516 and Arg531. The AMP site is built by Asp516 and Arg531. Ser539 is a CoA binding site. Arg542 is an ATP binding site. Arg612 provides a ligand contact to CoA. Ser679 is subject to Phosphoserine.

The protein belongs to the ATP-dependent AMP-binding enzyme family.

The protein resides in the cytoplasm. Its subcellular location is the nucleus. The enzyme catalyses acetate + ATP + CoA = acetyl-CoA + AMP + diphosphate. Its pathway is carbohydrate metabolism; pyruvate metabolism. Catalyzes the production of acetyl-CoA. Provides the acetyl-CoA source for histone acetylation in the nucleus. 'Anaerobic' isozyme of acetyl-coenzyme A synthetase, which is required for growth on fermentable carbon sources such as glucose. May be involved in the PDH (pyruvate dehydrogenase complex) bypass. The sequence is that of Acetyl-coenzyme A synthetase 2 from Saccharomyces cerevisiae (strain ATCC 204508 / S288c) (Baker's yeast).